The primary structure comprises 276 residues: NH(3)-dependent NAD(+) synthetase (276 aa).

46-53 (GISGGQDS) provides a ligand contact to ATP. Asp52 is a binding site for Mg(2+). A deamido-NAD(+)-binding site is contributed by Arg140. An ATP-binding site is contributed by Thr160. Position 165 (Glu165) interacts with Mg(2+). The deamido-NAD(+) site is built by Lys173 and Asp180. ATP is bound by residues Lys189 and Thr211. 260 to 261 (HK) contacts deamido-NAD(+).

The protein belongs to the NAD synthetase family. In terms of assembly, homodimer.

It carries out the reaction deamido-NAD(+) + NH4(+) + ATP = AMP + diphosphate + NAD(+) + H(+). The protein operates within cofactor biosynthesis; NAD(+) biosynthesis; NAD(+) from deamido-NAD(+) (ammonia route): step 1/1. Functionally, catalyzes the ATP-dependent amidation of deamido-NAD to form NAD. Uses ammonia as a nitrogen source. This is NH(3)-dependent NAD(+) synthetase from Citrobacter koseri (strain ATCC BAA-895 / CDC 4225-83 / SGSC4696).